A 152-amino-acid polypeptide reads, in one-letter code: Large ribosomal subunit protein bL9 (152 aa).

Belongs to the bacterial ribosomal protein bL9 family.

Binds to the 23S rRNA. This chain is Large ribosomal subunit protein bL9, found in Synechococcus sp. (strain CC9311).